We begin with the raw amino-acid sequence, 191 residues long: MRNAKITRKTKETDIQMELELDGTGSSNIDTGIGFFDHMLTSFAKHGNLDLIIEATGDLIVDEHHLIEDTAIVLGQALSEALGDKDGIARFGDARIPMDEALADVVLDLGGRTYLVMKAEFEAPRVGEMNTQLVRHFFESLTDNSKMNLHIAVTGYNDHHKIEALFKAFAYALRRAVKIEGEGIKSTKGVL.

This sequence belongs to the imidazoleglycerol-phosphate dehydratase family.

Its subcellular location is the cytoplasm. The enzyme catalyses D-erythro-1-(imidazol-4-yl)glycerol 3-phosphate = 3-(imidazol-4-yl)-2-oxopropyl phosphate + H2O. It functions in the pathway amino-acid biosynthesis; L-histidine biosynthesis; L-histidine from 5-phospho-alpha-D-ribose 1-diphosphate: step 6/9. The sequence is that of Imidazoleglycerol-phosphate dehydratase from Methanococcoides burtonii (strain DSM 6242 / NBRC 107633 / OCM 468 / ACE-M).